The primary structure comprises 526 residues: Clostripain (526 aa).

The N-terminal stretch at methionine 1–alanine 27 is a signal peptide. The propeptide occupies asparagine 28–lysine 50. The propeptide at glutamate 182–arginine 190 is linker. Cysteine 231 acts as the Nucleophile in catalysis.

The protein belongs to the peptidase C11 family. In terms of assembly, heterodimer of a light chain and a heavy chain held together by strong non-covalent forces rather than by intramolecular disulfide bridges.

The enzyme catalyses Preferential cleavage: Arg-|-Xaa, including Arg-|-Pro bond, but not Lys-|-Xaa.. In terms of biological role, cysteine endopeptidase with strict specificity. The protein is Clostripain (cloSI) of Hathewaya histolytica (Clostridium histolyticum).